A 273-amino-acid chain; its full sequence is Putative pyruvate, phosphate dikinase regulatory protein (273 aa).

153-160 is a binding site for ADP; it reads GISRTSKT.

Belongs to the pyruvate, phosphate/water dikinase regulatory protein family. PDRP subfamily.

It catalyses the reaction N(tele)-phospho-L-histidyl/L-threonyl-[pyruvate, phosphate dikinase] + ADP = N(tele)-phospho-L-histidyl/O-phospho-L-threonyl-[pyruvate, phosphate dikinase] + AMP + H(+). The catalysed reaction is N(tele)-phospho-L-histidyl/O-phospho-L-threonyl-[pyruvate, phosphate dikinase] + phosphate + H(+) = N(tele)-phospho-L-histidyl/L-threonyl-[pyruvate, phosphate dikinase] + diphosphate. Functionally, bifunctional serine/threonine kinase and phosphorylase involved in the regulation of the pyruvate, phosphate dikinase (PPDK) by catalyzing its phosphorylation/dephosphorylation. In Rhizobium johnstonii (strain DSM 114642 / LMG 32736 / 3841) (Rhizobium leguminosarum bv. viciae), this protein is Putative pyruvate, phosphate dikinase regulatory protein.